We begin with the raw amino-acid sequence, 27 residues long: Flagellar filament 31.5 kDa core protein (27 aa).

This sequence belongs to the bacterial flagellin family. The flagellum consists of an outer layer composed of repeating units of FlaA around a core that contains one or all of five antigenically related polypeptides.

It localises to the periplasmic flagellum. The protein resides in the periplasm. Component of the core of the flagella. The sequence is that of Flagellar filament 31.5 kDa core protein from Spirochaeta aurantia.